A 375-amino-acid chain; its full sequence is Queuine tRNA-ribosyltransferase (375 aa).

Asp89 acts as the Proton acceptor in catalysis. Substrate contacts are provided by residues Asp89 to Phe93, Asp143, Gln187, and Gly214. Positions Gly245–Asp251 are RNA binding. Asp264 functions as the Nucleophile in the catalytic mechanism. Residues Thr269–Arg273 are RNA binding; important for wobble base 34 recognition. 4 residues coordinate Zn(2+): Cys302, Cys304, Cys307, and His333.

It belongs to the queuine tRNA-ribosyltransferase family. As to quaternary structure, homodimer. Within each dimer, one monomer is responsible for RNA recognition and catalysis, while the other monomer binds to the replacement base PreQ1. Zn(2+) is required as a cofactor.

The catalysed reaction is 7-aminomethyl-7-carbaguanine + guanosine(34) in tRNA = 7-aminomethyl-7-carbaguanosine(34) in tRNA + guanine. The protein operates within tRNA modification; tRNA-queuosine biosynthesis. In terms of biological role, catalyzes the base-exchange of a guanine (G) residue with the queuine precursor 7-aminomethyl-7-deazaguanine (PreQ1) at position 34 (anticodon wobble position) in tRNAs with GU(N) anticodons (tRNA-Asp, -Asn, -His and -Tyr). Catalysis occurs through a double-displacement mechanism. The nucleophile active site attacks the C1' of nucleotide 34 to detach the guanine base from the RNA, forming a covalent enzyme-RNA intermediate. The proton acceptor active site deprotonates the incoming PreQ1, allowing a nucleophilic attack on the C1' of the ribose to form the product. After dissociation, two additional enzymatic reactions on the tRNA convert PreQ1 to queuine (Q), resulting in the hypermodified nucleoside queuosine (7-(((4,5-cis-dihydroxy-2-cyclopenten-1-yl)amino)methyl)-7-deazaguanosine). This chain is Queuine tRNA-ribosyltransferase, found in Citrobacter koseri (strain ATCC BAA-895 / CDC 4225-83 / SGSC4696).